The following is a 120-amino-acid chain: uncharacterized protein (120 aa).

This is an uncharacterized protein from Dictyostelium discoideum (Social amoeba).